A 126-amino-acid chain; its full sequence is Heterotrimeric G protein gamma subunit GPG1 (126 aa).

G proteins are composed of 3 units, alpha, beta and gamma. GPG1 interacts with the beta subunits GBP1 and GPB2.

Its subcellular location is the cytoplasm. Its function is as follows. Gamma subunit of a guanine nucleotide-binding protein (G protein). G proteins are involved as modulators or transducers in various transmembrane signaling systems. The beta and gamma chains are required for the GTPase activity, for replacement of GDP by GTP, and for G protein-effector interaction. Involved in the determination of the cAMP level according to nutritional conditions, most probably as a regulator of cAMP phosphodiesterase. Required for the control of pseudohyphal and haploid invasive growth. The protein is Heterotrimeric G protein gamma subunit GPG1 (GPG1) of Saccharomyces cerevisiae (strain ATCC 204508 / S288c) (Baker's yeast).